A 160-amino-acid chain; its full sequence is MGKSHGYRSRTRYMFQRDFRKHGAVHMSTYLKIYKVGDIVDIKANGSIQKGMPHKFYQGKTGVVYNVTKSSVGVIINKMVGNRYLEKRLNLRVEHIKHSKCRQEFLERVKANAAKRAEAKAQGVAVQLKRQPAQPRESRIVSTEGNVPQTLAPVPYETFI.

K32 participates in a covalent cross-link: Glycyl lysine isopeptide (Lys-Gly) (interchain with G-Cter in ubiquitin).

It belongs to the eukaryotic ribosomal protein eL21 family. In terms of assembly, component of the large ribosomal subunit (LSU). Mature yeast ribosomes consist of a small (40S) and a large (60S) subunit. The 40S small subunit contains 1 molecule of ribosomal RNA (18S rRNA) and 33 different proteins (encoded by 57 genes). The large 60S subunit contains 3 rRNA molecules (25S, 5.8S and 5S rRNA) and 46 different proteins (encoded by 81 genes).

It is found in the cytoplasm. Component of the ribosome, a large ribonucleoprotein complex responsible for the synthesis of proteins in the cell. The small ribosomal subunit (SSU) binds messenger RNAs (mRNAs) and translates the encoded message by selecting cognate aminoacyl-transfer RNA (tRNA) molecules. The large subunit (LSU) contains the ribosomal catalytic site termed the peptidyl transferase center (PTC), which catalyzes the formation of peptide bonds, thereby polymerizing the amino acids delivered by tRNAs into a polypeptide chain. The nascent polypeptides leave the ribosome through a tunnel in the LSU and interact with protein factors that function in enzymatic processing, targeting, and the membrane insertion of nascent chains at the exit of the ribosomal tunnel. The protein is Large ribosomal subunit protein eL21B of Saccharomyces cerevisiae (strain ATCC 204508 / S288c) (Baker's yeast).